A 436-amino-acid chain; its full sequence is MSATTQEKGLNYKVKDLSQAEWGRQEIILAEKEMPGLMALRQEYKGKKPLAGARIAGSLHMTIQTAVLIETLTELGAEVRWSSCNIFSTQDHAAAAIAKAGVPVFAWKGETEEEYWWCIEQTLFFGDKGPNMILDDGGDLTAYVHEKYPKLLSEIRGISEETTTGVKSLYKLLKKGELKVPAFNVNDSVTKSKFDNLYGCRESLADGIKRATDVMLAGKVALVCGFGDVGKGSAASLRNFGARVIVTEIDPICALQASMEGYQVLRVEDIIEQVDIVVTATGNDDIITLEHMKAMKDGAILCNIGHFDTEIQMSRLNSEKGVTKKEIKPQVDKYTFPDGKSIVVLAEGRLVNLGCATGHPSFVMSCSFTNQVLAQIELYNNKYELGVYTLPKHLDEKVAALHLEQLGVRLTKLNQKQADYLGVPLNGPFKPENYRY.

Positions 62, 136, and 161 each coordinate substrate. 162-164 serves as a coordination point for NAD(+); it reads TTT. Substrate contacts are provided by Lys191 and Asp195. Residues Asn196, 225 to 230, Glu248, Asn283, 304 to 306, and Asn352 contribute to the NAD(+) site; these read GFGDVG and IGH.

It belongs to the adenosylhomocysteinase family. NAD(+) serves as cofactor.

Its subcellular location is the cytoplasm. It carries out the reaction S-adenosyl-L-homocysteine + H2O = L-homocysteine + adenosine. It participates in amino-acid biosynthesis; L-homocysteine biosynthesis; L-homocysteine from S-adenosyl-L-homocysteine: step 1/1. Its function is as follows. May play a key role in the regulation of the intracellular concentration of adenosylhomocysteine. The chain is Adenosylhomocysteinase from Leptospira borgpetersenii serovar Hardjo-bovis (strain JB197).